The primary structure comprises 54 residues: Putative ankyrin repeat protein RC0701 (54 aa).

One copy of the ANK repeat lies at 17–46; sequence SGKTPLDWYSDYNATKIVETLIKNGGNVSS.

This chain is Putative ankyrin repeat protein RC0701, found in Rickettsia conorii (strain ATCC VR-613 / Malish 7).